We begin with the raw amino-acid sequence, 363 residues long: Probable tRNA pseudouridine synthase D (363 aa).

Asp-82 (nucleophile) is an active-site residue. Residues Tyr-151–Thr-363 enclose the TRUD domain.

The protein belongs to the pseudouridine synthase TruD family.

The enzyme catalyses uridine(13) in tRNA = pseudouridine(13) in tRNA. Its function is as follows. Could be responsible for synthesis of pseudouridine from uracil-13 in transfer RNAs. The polypeptide is Probable tRNA pseudouridine synthase D (Sulfurisphaera tokodaii (strain DSM 16993 / JCM 10545 / NBRC 100140 / 7) (Sulfolobus tokodaii)).